Consider the following 143-residue polypeptide: uncharacterized protein (143 aa).

It to E.coli YifN.

This is an uncharacterized protein from Haemophilus influenzae (strain ATCC 51907 / DSM 11121 / KW20 / Rd).